A 276-amino-acid polypeptide reads, in one-letter code: Tryptase beta-2 (276 aa).

The first 21 residues, 1–21, serve as a signal peptide directing secretion; it reads MLKRRLLLLWALSLLASLVYS. Residues 22–31 constitute a propeptide, activation peptide; the sequence is APRPANQRVG. The region spanning 32–273 is the Peptidase S1 domain; sequence IVGGHEASES…YLDWIHRYVP (242 aa). A disulfide bridge connects residues Cys60 and Cys76. His75 acts as the Charge relay system in catalysis. A Phosphotyrosine modification is found at Tyr98. Asp122 functions as the Charge relay system in the catalytic mechanism. Asn133 carries an N-linked (GlcNAc...) asparagine glycan. 3 disulfide bridges follow: Cys156-Cys231, Cys189-Cys212, and Cys221-Cys249. Residue Ser225 is the Charge relay system of the active site.

This sequence belongs to the peptidase S1 family. Tryptase subfamily. Homotetramer. The active tetramer is converted to inactive monomers at neutral and acidic pH in the absence of heparin. Low concentrations of inactive monomers become active monomers at pH 6.0 in the presence of heparin. When the concentration of active monomers is higher, they convert to active monomers and then to active tetramers. These monomers are active and functionally distinct from the tetrameric enzyme. In contrast to the hidden active sites in the tetrameric form, the active site of the monomeric form is accessible for macromolecular proteins and inhibitors, e.g. fibrinogen which is a substrate for the monomeric but not for the tetrameric form. The monomeric form forms a complex with SERPINB6. In terms of tissue distribution, during embryogenesis, detected primarily in skin.

The protein localises to the secreted. The enzyme catalyses Preferential cleavage: Arg-|-Xaa, Lys-|-Xaa, but with more restricted specificity than trypsin.. In terms of biological role, tryptase is the major neutral protease present in mast cells and is secreted upon the coupled activation-degranulation response of this cell type. Plays a role in innate immunity. This is Tryptase beta-2 (Tpsb2) from Mus musculus (Mouse).